The following is an 88-amino-acid chain: Large ribosomal subunit protein bL27 (88 aa).

It belongs to the bacterial ribosomal protein bL27 family.

This Parabacteroides distasonis (strain ATCC 8503 / DSM 20701 / CIP 104284 / JCM 5825 / NCTC 11152) protein is Large ribosomal subunit protein bL27.